The chain runs to 139 residues: Autophagy-related protein 31 (139 aa).

This sequence belongs to the ATG31 family. In terms of assembly, forms a stable complex with ATG17 and ATG29. Interacts directly with ATG29. The ATG17-ATG29-ATG31 complex interacts with the ATG1-ATG13 complex. Note=The interaction with the ATG1-ATG13 complex is induced by starvation.

It is found in the preautophagosomal structure. In terms of biological role, plays a role in starvation-induced autophagy. Involved in mitophagy. Functions with ATG17 and ATG29 at the preautophagosomal structure (PAS) in order to form normal autophagosomes under starvation conditions. The chain is Autophagy-related protein 31 from Kluyveromyces marxianus (strain DMKU3-1042 / BCC 29191 / NBRC 104275) (Yeast).